Reading from the N-terminus, the 327-residue chain is Phenylalanine--tRNA ligase alpha subunit (327 aa).

Glu-252 provides a ligand contact to Mg(2+).

The protein belongs to the class-II aminoacyl-tRNA synthetase family. Phe-tRNA synthetase alpha subunit type 1 subfamily. Tetramer of two alpha and two beta subunits. The cofactor is Mg(2+).

The protein localises to the cytoplasm. It carries out the reaction tRNA(Phe) + L-phenylalanine + ATP = L-phenylalanyl-tRNA(Phe) + AMP + diphosphate + H(+). This is Phenylalanine--tRNA ligase alpha subunit from Yersinia pseudotuberculosis serotype O:1b (strain IP 31758).